A 289-amino-acid polypeptide reads, in one-letter code: Glyoxylate/succinic semialdehyde reductase 1 (289 aa).

Methionine 1 carries the post-translational modification N-acetylmethionine. NADP(+) contacts are provided by residues 4 to 18 (GFLGLGIMGKAMSMN) and threonine 95. Lysine 170 is a catalytic residue. An NADP(+)-binding site is contributed by lysine 238.

The protein belongs to the HIBADH-related family. NP60 subfamily.

The protein localises to the cytoplasm. It is found in the cytosol. The enzyme catalyses glycolate + NADP(+) = glyoxylate + NADPH + H(+). It carries out the reaction 4-hydroxybutanoate + NADP(+) = succinate semialdehyde + NADPH + H(+). With respect to regulation, the ratio of NADPH/NADP(+) may regulate enzymatic activity. In terms of biological role, catalyzes the NADPH-dependent reduction of glyoxylate to glycolate as well as succinic semialdehyde (SSA) to gamma-hydroxybutyrate in vitro. May function in redox homeostasis and play a role in oxidative stress tolerance by detoxifying glyoxylate and SSA generated in glycolate metabolism and GABA metabolism, respectively. In Arabidopsis thaliana (Mouse-ear cress), this protein is Glyoxylate/succinic semialdehyde reductase 1 (GLYR1).